A 361-amino-acid chain; its full sequence is Chorismate synthase (361 aa).

NADP(+) contacts are provided by arginine 48 and arginine 54. Residues 125–127, 238–239, glycine 278, 293–297, and arginine 319 contribute to the FMN site; these read RSS, NA, and KPTSS.

The protein belongs to the chorismate synthase family. In terms of assembly, homotetramer. It depends on FMNH2 as a cofactor.

The catalysed reaction is 5-O-(1-carboxyvinyl)-3-phosphoshikimate = chorismate + phosphate. It functions in the pathway metabolic intermediate biosynthesis; chorismate biosynthesis; chorismate from D-erythrose 4-phosphate and phosphoenolpyruvate: step 7/7. Catalyzes the anti-1,4-elimination of the C-3 phosphate and the C-6 proR hydrogen from 5-enolpyruvylshikimate-3-phosphate (EPSP) to yield chorismate, which is the branch point compound that serves as the starting substrate for the three terminal pathways of aromatic amino acid biosynthesis. This reaction introduces a second double bond into the aromatic ring system. The sequence is that of Chorismate synthase from Klebsiella pneumoniae subsp. pneumoniae (strain ATCC 700721 / MGH 78578).